The following is a 162-amino-acid chain: Transcription elongation factor GreA (162 aa).

Residues 45 to 74 (ENAEYEAAREKQAFIEGRIKELEDMTARAE) adopt a coiled-coil conformation.

Belongs to the GreA/GreB family.

In terms of biological role, necessary for efficient RNA polymerase transcription elongation past template-encoded arresting sites. The arresting sites in DNA have the property of trapping a certain fraction of elongating RNA polymerases that pass through, resulting in locked ternary complexes. Cleavage of the nascent transcript by cleavage factors such as GreA or GreB allows the resumption of elongation from the new 3'terminus. GreA releases sequences of 2 to 3 nucleotides. This is Transcription elongation factor GreA from Rickettsia prowazekii (strain Madrid E).